The sequence spans 102 residues: Monothiol glutaredoxin-S8 (102 aa).

The Glutaredoxin domain occupies 1–101 (MEKIQKMISE…PMLKRFGALW (101 aa)). Cys21 contacts [2Fe-2S] cluster. The Responsive for interaction with TGA factors signature appears at 99 to 102 (ALWL).

Belongs to the glutaredoxin family. CC-type subfamily.

Its subcellular location is the cytoplasm. It localises to the nucleus. Its function is as follows. May only reduce GSH-thiol disulfides, but not protein disulfides. The polypeptide is Monothiol glutaredoxin-S8 (GRXS8) (Arabidopsis thaliana (Mouse-ear cress)).